We begin with the raw amino-acid sequence, 82 residues long: UPF0213 protein SH2523 (82 aa).

Positions 2–77 (AKHYVYIVKC…KTFSRQQKLK (76 aa)) constitute a GIY-YIG domain.

The protein belongs to the UPF0213 family.

In Staphylococcus haemolyticus (strain JCSC1435), this protein is UPF0213 protein SH2523.